The sequence spans 456 residues: Equilibrative nucleoside transporter 2 (456 aa).

A helical membrane pass occupies residues 13 to 33 (LVGISFFILGLGTLLPWNFFI). Residues Asn48 and Asn57 are each glycosylated (N-linked (GlcNAc...) asparagine). The next 5 membrane-spanning stretches (helical) occupy residues 70-90 (WVTLLSQLPLLLFTLLNSFLY), 99-119 (ILGSLLAILLLFALTAALVKV), 124-144 (GPFFSITMASVCFINSFSAVL), 162-182 (LFLSGQGLAGIFAALAMLLSM), and 193-213 (LGYFITPCVGILMSIVCYLSL). The N-linked (GlcNAc...) asparagine glycan is linked to Asn225. Residue Ser252 is modified to Phosphoserine. Transmembrane regions (helical) follow at residues 291–311 (WLTALCLVLVFTVTLSVFPAI), 324–344 (WSQFFNPICCFLLFNIMDWLG), 360–380 (LLPLLVCLRFLFVPLFMLCHV), 386–406 (LPILFPQDAYFITFMLLFAVS), and 432–452 (ALMTFFLALGLSCGASLSFLF).

The protein belongs to the SLC29A/ENT transporter (TC 2.A.57) family. Post-translationally, glycosylated. In terms of tissue distribution, highly expressed in skeletal muscle. Expressed in liver, lung, placenta, brain, heart, kidney and ovarian tissues. Expressed in testis at the blood-brain-barrier.

The protein resides in the apical cell membrane. It localises to the basolateral cell membrane. It carries out the reaction inosine(in) = inosine(out). It catalyses the reaction adenosine(in) = adenosine(out). The catalysed reaction is uridine(out) = uridine(in). The enzyme catalyses thymidine(in) = thymidine(out). It carries out the reaction hypoxanthine(out) = hypoxanthine(in). It catalyses the reaction adenine(out) = adenine(in). The catalysed reaction is cytidine(in) = cytidine(out). The enzyme catalyses thymine(out) = thymine(in). It carries out the reaction uracil(in) = uracil(out). It catalyses the reaction guanine(out) = guanine(in). The catalysed reaction is guanosine(in) = guanosine(out). Its function is as follows. Bidirectional uniporter involved in the facilitative transport of nucleosides and nucleobases, and contributes to maintaining their cellular homeostasis. Functions as a Na(+)-independent, passive transporter. Involved in the transport of nucleosides such as inosine, adenosine, uridine, thymidine, cytidine and guanosine. Also able to transport purine nucleobases (hypoxanthine, adenine, guanine) and pyrimidine nucleobases (thymine, uracil). Involved in nucleoside transport at basolateral membrane of kidney cells, allowing liver absorption of nucleoside metabolites. Mediates apical nucleoside uptake into Sertoli cells, thereby regulating the transport of nucleosides in testis across the blood-testis-barrier. Mediates both the influx and efflux of hypoxanthine in skeletal muscle microvascular endothelial cells to control the amount of intracellular hypoxanthine available for xanthine oxidase-mediated ROS production. Non functional nucleoside transporter protein for adenosine or thymidine transport. Does not express on cell membrane. The sequence is that of Equilibrative nucleoside transporter 2 from Homo sapiens (Human).